A 659-amino-acid polypeptide reads, in one-letter code: tRNA uridine 5-carboxymethylaminomethyl modification enzyme MnmG (659 aa).

13 to 18 lines the FAD pocket; it reads GGGHAG. NAD(+) is bound at residue 281–295; it reads GPRYCPSVEDKINRF.

The protein belongs to the MnmG family. Homodimer. Heterotetramer of two MnmE and two MnmG subunits. FAD is required as a cofactor.

It is found in the cytoplasm. NAD-binding protein involved in the addition of a carboxymethylaminomethyl (cmnm) group at the wobble position (U34) of certain tRNAs, forming tRNA-cmnm(5)s(2)U34. In Delftia acidovorans (strain DSM 14801 / SPH-1), this protein is tRNA uridine 5-carboxymethylaminomethyl modification enzyme MnmG.